We begin with the raw amino-acid sequence, 158 residues long: 6,7-dimethyl-8-ribityllumazine synthase (158 aa).

5-amino-6-(D-ribitylamino)uracil contacts are provided by residues Phe22, 57–59 (AFE), and 81–83 (AVI). 86-87 (GT) provides a ligand contact to (2S)-2-hydroxy-3-oxobutyl phosphate. The active-site Proton donor is His89. Residue Phe114 coordinates 5-amino-6-(D-ribitylamino)uracil. (2S)-2-hydroxy-3-oxobutyl phosphate is bound at residue Arg128.

It belongs to the DMRL synthase family. As to quaternary structure, forms an icosahedral capsid composed of 60 subunits, arranged as a dodecamer of pentamers.

It carries out the reaction (2S)-2-hydroxy-3-oxobutyl phosphate + 5-amino-6-(D-ribitylamino)uracil = 6,7-dimethyl-8-(1-D-ribityl)lumazine + phosphate + 2 H2O + H(+). It functions in the pathway cofactor biosynthesis; riboflavin biosynthesis; riboflavin from 2-hydroxy-3-oxobutyl phosphate and 5-amino-6-(D-ribitylamino)uracil: step 1/2. Catalyzes the formation of 6,7-dimethyl-8-ribityllumazine by condensation of 5-amino-6-(D-ribitylamino)uracil with 3,4-dihydroxy-2-butanone 4-phosphate. This is the penultimate step in the biosynthesis of riboflavin. The protein is 6,7-dimethyl-8-ribityllumazine synthase of Shewanella amazonensis (strain ATCC BAA-1098 / SB2B).